Reading from the N-terminus, the 314-residue chain is Protoheme IX farnesyltransferase (314 aa).

8 consecutive transmembrane segments (helical) span residues Ile-36–Phe-56, Trp-65–Val-85, Ser-114–Ser-134, Trp-135–Trp-155, Trp-179–Ile-199, Ile-237–Ile-257, Phe-259–Phe-279, and Ile-290–Leu-310.

It belongs to the UbiA prenyltransferase family. Protoheme IX farnesyltransferase subfamily. Interacts with CtaA.

It is found in the cell membrane. It catalyses the reaction heme b + (2E,6E)-farnesyl diphosphate + H2O = Fe(II)-heme o + diphosphate. It participates in porphyrin-containing compound metabolism; heme O biosynthesis; heme O from protoheme: step 1/1. Converts heme B (protoheme IX) to heme O by substitution of the vinyl group on carbon 2 of heme B porphyrin ring with a hydroxyethyl farnesyl side group. This chain is Protoheme IX farnesyltransferase, found in Oceanobacillus iheyensis (strain DSM 14371 / CIP 107618 / JCM 11309 / KCTC 3954 / HTE831).